A 22-amino-acid chain; its full sequence is Motilin (22 aa).

Over residues 1-11 (FVPFFTQSDIQ) the composition is skewed to polar residues. Residues 1 to 22 (FVPFFTQSDIQKMQEKERNKGQ) are disordered. A compositionally biased stretch (basic and acidic residues) spans 12 to 22 (KMQEKERNKGQ).

Belongs to the motilin family.

Its subcellular location is the secreted. Its function is as follows. Plays an important role in the regulation of interdigestive gastrointestinal motility and indirectly causes rhythmic contraction of duodenal and colonic smooth muscle. This is Motilin (MLN) from Gallus gallus (Chicken).